Here is a 262-residue protein sequence, read N- to C-terminus: Phosphate import ATP-binding protein PstB 2 (262 aa).

The region spanning 18–257 (FVVRNLDLFY…PSDRRTEDYI (240 aa)) is the ABC transporter domain. ATP is bound at residue 50–57 (GPSGCGKS).

The protein belongs to the ABC transporter superfamily. Phosphate importer (TC 3.A.1.7) family. As to quaternary structure, the complex is composed of two ATP-binding proteins (PstB), two transmembrane proteins (PstC and PstA) and a solute-binding protein (PstS).

The protein resides in the cell membrane. The enzyme catalyses phosphate(out) + ATP + H2O = ADP + 2 phosphate(in) + H(+). Functionally, part of the ABC transporter complex PstSACB involved in phosphate import. Responsible for energy coupling to the transport system. The sequence is that of Phosphate import ATP-binding protein PstB 2 from Symbiobacterium thermophilum (strain DSM 24528 / JCM 14929 / IAM 14863 / T).